Reading from the N-terminus, the 362-residue chain is Dihydroorotate dehydrogenase (quinone) (362 aa).

FMN contacts are provided by residues Ala-62 to Lys-66 and Thr-86. Lys-66 lines the substrate pocket. Asn-111 to Phe-115 serves as a coordination point for substrate. FMN-binding residues include Asn-139 and Asn-170. Asn-170 provides a ligand contact to substrate. Catalysis depends on Ser-173, which acts as the Nucleophile. Residue Asn-175 participates in substrate binding. Positions 215 and 243 each coordinate FMN. Asn-244–Thr-245 contacts substrate. FMN contacts are provided by residues Gly-266, Gly-295, and Tyr-316–Ser-317.

This sequence belongs to the dihydroorotate dehydrogenase family. Type 2 subfamily. As to quaternary structure, monomer. The cofactor is FMN.

Its subcellular location is the cell membrane. The enzyme catalyses (S)-dihydroorotate + a quinone = orotate + a quinol. It participates in pyrimidine metabolism; UMP biosynthesis via de novo pathway; orotate from (S)-dihydroorotate (quinone route): step 1/1. Catalyzes the conversion of dihydroorotate to orotate with quinone as electron acceptor. In Rhizobium meliloti (strain 1021) (Ensifer meliloti), this protein is Dihydroorotate dehydrogenase (quinone).